We begin with the raw amino-acid sequence, 62 residues long: Chromatin protein Cren7 1 (62 aa).

Belongs to the Cren7 family. As to quaternary structure, monomer. In terms of processing, methylated at multiple sites, to varying extents.

The protein resides in the chromosome. It localises to the cytoplasm. A chromatin protein, binds double-stranded DNA without sequence specificity. Constrains negative DNA supercoils. The sequence is that of Chromatin protein Cren7 1 (cren7-1) from Hyperthermus butylicus (strain DSM 5456 / JCM 9403 / PLM1-5).